Here is a 1154-residue protein sequence, read N- to C-terminus: Kinesin-like protein KIN-7E, chloroplastic (1154 aa).

2 stretches are compositionally biased toward low complexity: residues 1–14 (MSSSSRPGRASISP) and 29–109 (VAAA…PPVA). A chloroplast-targeting transit peptide spans 1–21 (MSSSSRPGRASISPFRSRRTS). The interval 1–109 (MSSSSRPGRA…RAAGRAPPVA (109 aa)) is disordered. In terms of domain architecture, Kinesin motor spans 119-437 (NIMVTVRFRP…LKFAHRSKHI (319 aa)). 199 to 206 (GVTSSGKT) contributes to the ATP binding site. Residues 441 to 523 (ASQNKIIDEK…AALMGRIQRL (83 aa)) are a coiled coil. Positions 620–674 (LSTSVDSESTASGSPSFSRSSQQKHPLLDLKDGRRKSMTRKGDDPALTDSFPGRT) are disordered. The span at 628–640 (STASGSPSFSRSS) shows a compositional bias: low complexity. 2 coiled-coil regions span residues 734–761 (DSQIQEQIEKLKNEIDEKKSHIRVLEQR) and 801–845 (ADNR…DNVA). Positions 838–885 (AKNEDNVASMQSSEPSSTSSNPRDLANEVASHSKMPSRTTEDHTESPL) are disordered. Residues 846–857 (SMQSSEPSSTSS) are compositionally biased toward low complexity. Residues 894 to 967 (AEIENLKLDK…DLAAAKDQTR (74 aa)) are a coiled coil.

This sequence belongs to the TRAFAC class myosin-kinesin ATPase superfamily. Kinesin family. KIN-7 subfamily.

Its subcellular location is the plastid. The protein localises to the chloroplast. The polypeptide is Kinesin-like protein KIN-7E, chloroplastic (Oryza sativa subsp. japonica (Rice)).